The chain runs to 146 residues: 3-hydroxyacyl-[acyl-carrier-protein] dehydratase FabZ (146 aa).

The active site involves histidine 47.

Belongs to the thioester dehydratase family. FabZ subfamily.

It localises to the cytoplasm. It carries out the reaction a (3R)-hydroxyacyl-[ACP] = a (2E)-enoyl-[ACP] + H2O. Involved in unsaturated fatty acids biosynthesis. Catalyzes the dehydration of short chain beta-hydroxyacyl-ACPs and long chain saturated and unsaturated beta-hydroxyacyl-ACPs. The chain is 3-hydroxyacyl-[acyl-carrier-protein] dehydratase FabZ from Nitrosospira multiformis (strain ATCC 25196 / NCIMB 11849 / C 71).